The following is a 318-amino-acid chain: Fibronectin type III domain-containing protein 11 (318 aa).

Residues 210 to 307 enclose the Fibronectin type-III domain; it reads VVFDRKASAA…DSLTLHTKPE (98 aa).

The polypeptide is Fibronectin type III domain-containing protein 11 (FNDC11) (Homo sapiens (Human)).